Here is a 439-residue protein sequence, read N- to C-terminus: Xylose isomerase (439 aa).

Residues His-101 and Asp-104 contribute to the active site. Residues Glu-232, Glu-268, His-271, Asp-296, Asp-307, Asp-309, and Asp-339 each coordinate Mg(2+).

This sequence belongs to the xylose isomerase family. Homotetramer. The cofactor is Mg(2+).

It localises to the cytoplasm. The enzyme catalyses alpha-D-xylose = alpha-D-xylulofuranose. This Yersinia pseudotuberculosis serotype O:1b (strain IP 31758) protein is Xylose isomerase.